The sequence spans 1252 residues: DNA-directed RNA polymerase subunit beta (1252 aa).

This sequence belongs to the RNA polymerase beta chain family. As to quaternary structure, the RNAP catalytic core consists of 2 alpha, 1 beta, 1 beta' and 1 omega subunit. When a sigma factor is associated with the core the holoenzyme is formed, which can initiate transcription.

It carries out the reaction RNA(n) + a ribonucleoside 5'-triphosphate = RNA(n+1) + diphosphate. Functionally, DNA-dependent RNA polymerase catalyzes the transcription of DNA into RNA using the four ribonucleoside triphosphates as substrates. This is DNA-directed RNA polymerase subunit beta from Chlamydia felis (strain Fe/C-56) (Chlamydophila felis).